A 373-amino-acid polypeptide reads, in one-letter code: NAD-dependent protein deacylase SRT2 (373 aa).

A mitochondrion-targeting transit peptide spans 1–47 (MNMRRVFGGVSTDLFPSRSMYRPLQSGGNLVMLFKGCRRFVRTTCRV). In terms of domain architecture, Deacetylase sirtuin-type spans 75 to 373 (DPPNMEDIHK…DVGSLSVPAL (299 aa)). NAD(+) is bound by residues 100 to 120 (GAGV…GAYS) and 179 to 182 (QNVD). The Proton acceptor role is filled by H196. Positions 204, 207, 271, and 274 each coordinate Zn(2+). NAD(+) contacts are provided by residues 311–313 (GSS), 337–339 (NIG), and V355.

The protein belongs to the sirtuin family. Class II subfamily. In terms of assembly, binds to the promoter region of genes influenced by ethylene. Interacts with ENAP1; this interaction is enhanced in the presence of ethylene. Zn(2+) is required as a cofactor.

Its subcellular location is the mitochondrion matrix. It is found in the nucleus. It carries out the reaction N(6)-acetyl-L-lysyl-[protein] + NAD(+) + H2O = 2''-O-acetyl-ADP-D-ribose + nicotinamide + L-lysyl-[protein]. Its function is as follows. NAD-dependent protein deacylase. Catalyzes the NAD-dependent hydrolysis of acyl groups from lysine residues. Involved in responses to ethylene leading to the transcriptional repression of some ethylene-responsive genes via the regulation of histone acetylation H3K9Ac. Negatively regulates plant basal defense against plant pathogens, possibly by suppressing salicylic acid biosynthesis. This chain is NAD-dependent protein deacylase SRT2, found in Arabidopsis thaliana (Mouse-ear cress).